Reading from the N-terminus, the 318-residue chain is Methionyl-tRNA formyltransferase (318 aa).

114–117 is a (6S)-5,6,7,8-tetrahydrofolate binding site; that stretch reads SLLP.

Belongs to the Fmt family.

It carries out the reaction L-methionyl-tRNA(fMet) + (6R)-10-formyltetrahydrofolate = N-formyl-L-methionyl-tRNA(fMet) + (6S)-5,6,7,8-tetrahydrofolate + H(+). Attaches a formyl group to the free amino group of methionyl-tRNA(fMet). The formyl group appears to play a dual role in the initiator identity of N-formylmethionyl-tRNA by promoting its recognition by IF2 and preventing the misappropriation of this tRNA by the elongation apparatus. The sequence is that of Methionyl-tRNA formyltransferase from Protochlamydia amoebophila (strain UWE25).